We begin with the raw amino-acid sequence, 265 residues long: Isoprenyl transferase (265 aa).

Residue Asp-35 is part of the active site. Position 35 (Asp-35) interacts with Mg(2+). Substrate-binding positions include 36-39 (GNGR), Trp-40, Arg-48, His-52, and 80-82 (STE). Asn-83 acts as the Proton acceptor in catalysis. Residues Trp-84, Arg-86, Arg-203, and 209–211 (RIS) each bind substrate. Glu-222 serves as a coordination point for Mg(2+).

This sequence belongs to the UPP synthase family. As to quaternary structure, homodimer. Requires Mg(2+) as cofactor.

In terms of biological role, catalyzes the condensation of isopentenyl diphosphate (IPP) with allylic pyrophosphates generating different type of terpenoids. This chain is Isoprenyl transferase, found in Prochlorococcus marinus (strain MIT 9313).